Consider the following 218-residue polypeptide: Methylthioribulose-1-phosphate dehydratase (218 aa).

Zn(2+)-binding residues include H107 and H109.

Belongs to the aldolase class II family. MtnB subfamily. Requires Zn(2+) as cofactor.

It carries out the reaction 5-(methylsulfanyl)-D-ribulose 1-phosphate = 5-methylsulfanyl-2,3-dioxopentyl phosphate + H2O. It participates in amino-acid biosynthesis; L-methionine biosynthesis via salvage pathway; L-methionine from S-methyl-5-thio-alpha-D-ribose 1-phosphate: step 2/6. Functionally, catalyzes the dehydration of methylthioribulose-1-phosphate (MTRu-1-P) into 2,3-diketo-5-methylthiopentyl-1-phosphate (DK-MTP-1-P). The protein is Methylthioribulose-1-phosphate dehydratase of Xylella fastidiosa (strain 9a5c).